The sequence spans 648 residues: Leucine-rich repeat and WD repeat-containing protein 1 (648 aa).

LRR repeat units follow at residues 22–43 (KIQSLNLSGLQLLSEHLDPNLL), 48–69 (KLRELDLSNNLLETLPANLGLS), 70–91 (HLRILRCTNNQLGDVTALHQFP), and 92–113 (ELEELNLEGNPFLTVSDNLKVS). A disordered region spans residues 214–262 (VEHPQAAGASKFRAREVASKRPGKDPVTLPPSKRVRALPPAQAEGSPMG). Over residues 226 to 237 (RAREVASKRPGK) the composition is skewed to basic and acidic residues. Phosphoserine is present on Ser259. 5 WD repeats span residues 392-432 (AHKK…QDYK), 443-482 (CGSVPLRLCPVATCPDDFLLAGCEGGCYCWDVRLDQPQKQ), 497-536 (VSGQRVDGLAFVNEDVVASKGSGQGTIYLWSWSQTWAGRG), 541-592 (LPVV…KEPP), and 616-648 (VTKTMINTVVANAAFTYLTALTDSNIVSIWRRC).

This sequence belongs to the LRWD1 family. Integral component of the ORC complex. Directly interacts with CDT1, GMNN and ORC2. Interacts with ORC2 only when non-ubiquitinated; this interaction prevents LRWD1 ubiquitination and degradation. Some of these interactions are regulated in a cell-cycle dependent manner. Interaction with ORC1 occurs predominantly during G1. Association with phosphorylated ORC1 during mitosis is not efficient. Interaction with CDT1 occurs during G1 phase, as well as during mitosis with phosphorylated CDT1. Interaction with GMNN occurs from G1/S to mitosis. Interaction with ORC2 is observed throughout the cell cycle. The stoichiometry of the ORCA/ORC/CDT1/GMNN complex is 1:1:1:2. Interacts with CUL4A and DDB1; this interaction may lead to ubiquitination. In terms of processing, ubiquitinated; undergoes 'Lys-48'-linked polyubiquitination leading to proteasomal degradation. Ubiquitination occurs within the WD repeats at the end of the G1 phase. Ubiquitination may be catalyzed by the CUL4-DDB1 E3 ubiquitin-protein ligase complex and other E3 ligases. As to expression, testis-specific.

Its subcellular location is the nucleus. The protein localises to the chromosome. It is found in the centromere. The protein resides in the telomere. It localises to the cytoplasm. Its subcellular location is the cytoskeleton. The protein localises to the microtubule organizing center. It is found in the centrosome. The protein resides in the kinetochore. Its function is as follows. Required for G1/S transition. Recruits and stabilizes the origin recognition complex (ORC) onto chromatin during G1 to establish pre-replication complex (preRC) and to heterochromatic sites in post-replicated cells. Binds a combination of DNA and histone methylation repressive marks on heterochromatin. Binds histone H3 and H4 trimethylation marks H3K9me3, H3K27me3 and H4K20me3 in a cooperative manner with DNA methylation. Required for silencing of major satellite repeats. May be important ORC2, ORC3 and ORC4 stability. The sequence is that of Leucine-rich repeat and WD repeat-containing protein 1 (LRWD1) from Mus musculus (Mouse).